Here is a 347-residue protein sequence, read N- to C-terminus: NADH-ubiquinone oxidoreductase chain 2 (347 aa).

The next 11 helical transmembrane spans lie at 3 to 23 (PVVL…VMTT), 25 to 45 (HWLL…PILM), 59 to 79 (YFLT…INLI), 96 to 116 (IIMT…FWVP), 122 to 142 (IQLS…MSIL), 149 to 169 (INLH…GWGG), 178 to 198 (IMAY…IYNP), 200 to 220 (MALL…MTFM), 237 to 257 (MPLL…LPPL), 274 to 294 (NSII…FFYM), and 325 to 345 (LLSP…MLAL).

It belongs to the complex I subunit 2 family. As to quaternary structure, core subunit of respiratory chain NADH dehydrogenase (Complex I) which is composed of 45 different subunits. Interacts with TMEM242.

Its subcellular location is the mitochondrion inner membrane. The enzyme catalyses a ubiquinone + NADH + 5 H(+)(in) = a ubiquinol + NAD(+) + 4 H(+)(out). In terms of biological role, core subunit of the mitochondrial membrane respiratory chain NADH dehydrogenase (Complex I) which catalyzes electron transfer from NADH through the respiratory chain, using ubiquinone as an electron acceptor. Essential for the catalytic activity and assembly of complex I. In Paranyctimene raptor (Unstriped tube-nosed fruit bat), this protein is NADH-ubiquinone oxidoreductase chain 2.